The following is a 213-amino-acid chain: 3,4-dihydroxy-2-butanone 4-phosphate synthase (213 aa).

Residues 37-38, Asp42, 150-154, and Glu174 contribute to the D-ribulose 5-phosphate site; these read RE and RAGHT. Glu38 is a binding site for Mg(2+). His153 contacts Mg(2+).

It belongs to the DHBP synthase family. Homodimer. Mg(2+) is required as a cofactor. Requires Mn(2+) as cofactor.

The enzyme catalyses D-ribulose 5-phosphate = (2S)-2-hydroxy-3-oxobutyl phosphate + formate + H(+). Its pathway is cofactor biosynthesis; riboflavin biosynthesis; 2-hydroxy-3-oxobutyl phosphate from D-ribulose 5-phosphate: step 1/1. Catalyzes the conversion of D-ribulose 5-phosphate to formate and 3,4-dihydroxy-2-butanone 4-phosphate. The chain is 3,4-dihydroxy-2-butanone 4-phosphate synthase from Wigglesworthia glossinidia brevipalpis.